The following is a 188-amino-acid chain: Protein SSX1 (188 aa).

Disordered stretches follow at residues 1–22 (MNGD…EKRS) and 111–188 (IMPK…EDDE). The region spanning 20–83 (KRSKAFDDIA…KQATDFQGND (64 aa)) is the KRAB-related domain. The span at 115–125 (KPAEDENDSKG) shows a compositional bias: basic and acidic residues. Position 123 is a phosphoserine (Ser-123). The segment covering 153–170 (KRSGPKRGKHAWTHRLRE) has biased composition (basic residues). The span at 179–188 (EISDPEEDDE) shows a compositional bias: acidic residues.

The protein belongs to the SSX family. In terms of tissue distribution, expressed at high level in the testis. Expressed at low level in thyroid. Not detected in tonsil, colon, lung, spleen, prostate, kidney, striated and smooth muscles. Detected in rhabdomyosarcoma and fibrosarcoma cell lines. Not detected in mesenchymal and epithelial cell lines. Expressed in testis.

It localises to the cytoplasm. Its subcellular location is the cytoskeleton. It is found in the flagellum axoneme. Could act as a modulator of transcription. Plays a role in spermatogenesis. This chain is Protein SSX1 (SSX1), found in Homo sapiens (Human).